Here is a 357-residue protein sequence, read N- to C-terminus: Histidinol-phosphate aminotransferase (357 aa).

N6-(pyridoxal phosphate)lysine is present on Lys-221.

This sequence belongs to the class-II pyridoxal-phosphate-dependent aminotransferase family. Histidinol-phosphate aminotransferase subfamily. It depends on pyridoxal 5'-phosphate as a cofactor.

The catalysed reaction is L-histidinol phosphate + 2-oxoglutarate = 3-(imidazol-4-yl)-2-oxopropyl phosphate + L-glutamate. It functions in the pathway amino-acid biosynthesis; L-histidine biosynthesis; L-histidine from 5-phospho-alpha-D-ribose 1-diphosphate: step 7/9. This is Histidinol-phosphate aminotransferase (hisC) from Sulfurisphaera tokodaii (strain DSM 16993 / JCM 10545 / NBRC 100140 / 7) (Sulfolobus tokodaii).